Here is a 252-residue protein sequence, read N- to C-terminus: Hydroxyacylglutathione hydrolase (252 aa).

His-54, His-56, Asp-58, His-59, His-111, Asp-128, and His-166 together coordinate Zn(2+).

It belongs to the metallo-beta-lactamase superfamily. Glyoxalase II family. As to quaternary structure, monomer. Zn(2+) is required as a cofactor.

It catalyses the reaction an S-(2-hydroxyacyl)glutathione + H2O = a 2-hydroxy carboxylate + glutathione + H(+). It functions in the pathway secondary metabolite metabolism; methylglyoxal degradation; (R)-lactate from methylglyoxal: step 2/2. Functionally, thiolesterase that catalyzes the hydrolysis of S-D-lactoyl-glutathione to form glutathione and D-lactic acid. The protein is Hydroxyacylglutathione hydrolase of Vibrio parahaemolyticus serotype O3:K6 (strain RIMD 2210633).